We begin with the raw amino-acid sequence, 236 residues long: Small ribosomal subunit protein uS3 (236 aa).

A KH type-2 domain is found at 39 to 107; that stretch reads IRLYVLEELK…ETSLNIVEIH (69 aa).

The protein belongs to the universal ribosomal protein uS3 family. Part of the 30S ribosomal subunit. Forms a tight complex with proteins S10 and S14.

Functionally, binds the lower part of the 30S subunit head. Binds mRNA in the 70S ribosome, positioning it for translation. The polypeptide is Small ribosomal subunit protein uS3 (Bartonella quintana (strain Toulouse) (Rochalimaea quintana)).